The sequence spans 370 residues: 4-hydroxy-3-methylbut-2-en-1-yl diphosphate synthase (flavodoxin) (370 aa).

[4Fe-4S] cluster contacts are provided by C268, C271, C303, and E310.

It belongs to the IspG family. Requires [4Fe-4S] cluster as cofactor.

The enzyme catalyses (2E)-4-hydroxy-3-methylbut-2-enyl diphosphate + oxidized [flavodoxin] + H2O + 2 H(+) = 2-C-methyl-D-erythritol 2,4-cyclic diphosphate + reduced [flavodoxin]. It participates in isoprenoid biosynthesis; isopentenyl diphosphate biosynthesis via DXP pathway; isopentenyl diphosphate from 1-deoxy-D-xylulose 5-phosphate: step 5/6. Its function is as follows. Converts 2C-methyl-D-erythritol 2,4-cyclodiphosphate (ME-2,4cPP) into 1-hydroxy-2-methyl-2-(E)-butenyl 4-diphosphate. The sequence is that of 4-hydroxy-3-methylbut-2-en-1-yl diphosphate synthase (flavodoxin) from Bacillus anthracis (strain A0248).